The sequence spans 382 residues: D-galactonate dehydratase (382 aa).

Position 183 (Asp183) interacts with Mg(2+). His185 acts as the Proton donor in catalysis. Mg(2+) is bound by residues Glu209 and Glu235. His285 (proton acceptor) is an active-site residue.

The protein belongs to the mandelate racemase/muconate lactonizing enzyme family. GalD subfamily. Mg(2+) is required as a cofactor.

The catalysed reaction is D-galactonate = 2-dehydro-3-deoxy-D-galactonate + H2O. The protein operates within carbohydrate acid metabolism; D-galactonate degradation; D-glyceraldehyde 3-phosphate and pyruvate from D-galactonate: step 1/3. In terms of biological role, catalyzes the dehydration of D-galactonate to 2-keto-3-deoxy-D-galactonate. This chain is D-galactonate dehydratase, found in Escherichia coli O9:H4 (strain HS).